The following is a 324-amino-acid chain: Aspartate carbamoyltransferase catalytic subunit (324 aa).

Residues R71 and T72 each contribute to the carbamoyl phosphate site. Residue K99 participates in L-aspartate binding. Carbamoyl phosphate-binding residues include R121, H151, and Q154. 2 residues coordinate L-aspartate: R184 and R239. Residues G280 and P281 each contribute to the carbamoyl phosphate site.

It belongs to the aspartate/ornithine carbamoyltransferase superfamily. ATCase family. In terms of assembly, heterododecamer (2C3:3R2) of six catalytic PyrB chains organized as two trimers (C3), and six regulatory PyrI chains organized as three dimers (R2).

The enzyme catalyses carbamoyl phosphate + L-aspartate = N-carbamoyl-L-aspartate + phosphate + H(+). It functions in the pathway pyrimidine metabolism; UMP biosynthesis via de novo pathway; (S)-dihydroorotate from bicarbonate: step 2/3. Functionally, catalyzes the condensation of carbamoyl phosphate and aspartate to form carbamoyl aspartate and inorganic phosphate, the committed step in the de novo pyrimidine nucleotide biosynthesis pathway. In Cupriavidus necator (strain ATCC 17699 / DSM 428 / KCTC 22496 / NCIMB 10442 / H16 / Stanier 337) (Ralstonia eutropha), this protein is Aspartate carbamoyltransferase catalytic subunit.